We begin with the raw amino-acid sequence, 376 residues long: Uroporphyrinogen decarboxylase (376 aa).

Substrate is bound by residues 29–33, Asp79, Tyr155, Ser210, and His342; that span reads RQAGR.

The protein belongs to the uroporphyrinogen decarboxylase family. As to quaternary structure, homodimer.

It is found in the cytoplasm. The catalysed reaction is uroporphyrinogen III + 4 H(+) = coproporphyrinogen III + 4 CO2. It participates in porphyrin-containing compound metabolism; protoporphyrin-IX biosynthesis; coproporphyrinogen-III from 5-aminolevulinate: step 4/4. Catalyzes the decarboxylation of four acetate groups of uroporphyrinogen-III to yield coproporphyrinogen-III. This chain is Uroporphyrinogen decarboxylase, found in Paracidovorax citrulli (strain AAC00-1) (Acidovorax citrulli).